Reading from the N-terminus, the 381-residue chain is Beta-1,4-galactosyltransferase 5 (381 aa).

The Cytoplasmic segment spans residues 1 to 11; the sequence is MPTHLRFRRRS. A helical; Signal-anchor for type II membrane protein transmembrane segment spans residues 12–32; it reads FLGLLFLFSLSTSALYFIYSA. At 33-381 the chain is on the lumenal side; it reads PGIVNEYLFM…SRDLAPVADY (349 aa). Residues N73, N82, and N120 are each glycosylated (N-linked (GlcNAc...) asparagine). A disulfide bond links C106 and C151. UDP-alpha-D-galactose-binding positions include 162–166, 201–203, 228–229, Y257, and W289; these read PFRNR, FNR, and VD. A disulfide bridge connects residues C222 and C241. Mn(2+) is bound at residue D229. 291-294 contacts N-acetyl-D-glucosamine; that stretch reads GEDD. H322 is a binding site for Mn(2+). 322–323 provides a ligand contact to UDP-alpha-D-galactose; that stretch reads HH. Residue R333 coordinates N-acetyl-D-glucosamine. The N-linked (GlcNAc...) asparagine glycan is linked to N366.

This sequence belongs to the glycosyltransferase 7 family. The cofactor is Mn(2+).

Its subcellular location is the golgi apparatus. It localises to the golgi stack membrane. The enzyme catalyses a beta-D-glucosyl-(1&lt;-&gt;1')-N-acylsphing-4-enine + UDP-alpha-D-galactose = a beta-D-Gal-(1-&gt;4)-beta-D-Glc-(1&lt;-&gt;1)-Cer(d18:1(4E)) + UDP + H(+). It functions in the pathway protein modification; protein glycosylation. The protein operates within sphingolipid metabolism. Catalyzes the synthesis of lactosylceramide (LacCer) via the transfer of galactose from UDP-galactose to glucosylceramide (GlcCer). Required for proper patterning of the dorsoventral axis during embryogenesis through the regulation of BMP signaling. Plays a role in proteoglycan glycosylation that is required for BMP-dependent specification of the dorsoventral axis. The chain is Beta-1,4-galactosyltransferase 5 (b4galt5) from Danio rerio (Zebrafish).